The following is a 183-amino-acid chain: Anterior gradient protein 1 (183 aa).

Residues 1–18 (MQAGLSLVCLVLLCSALG) form the signal peptide.

The protein belongs to the AGR family. From stage 18 (neurula) onward, expressed in the cement gland until it degenerates. More weakly expressed in the adjacent hatching gland.

Its subcellular location is the secreted. Its function is as follows. Does not appear to be required for cement gland formation. This is Anterior gradient protein 1 (ag1) from Xenopus laevis (African clawed frog).